Reading from the N-terminus, the 72-residue chain is Large ribosomal subunit protein uL29 (72 aa).

The protein belongs to the universal ribosomal protein uL29 family.

In Thermodesulfovibrio yellowstonii (strain ATCC 51303 / DSM 11347 / YP87), this protein is Large ribosomal subunit protein uL29.